A 176-amino-acid polypeptide reads, in one-letter code: NAD(P)H-quinone oxidoreductase subunit 6, chloroplastic (176 aa).

The next 5 helical transmembrane spans lie at 10–30, 32–52, 61–81, 92–112, and 152–172; these read FLLV…VLLP, PIYS…FYIL, AQLL…VMFM, LWTV…ISLI, and FFLP…GAIA.

Belongs to the complex I subunit 6 family. NDH is composed of at least 16 different subunits, 5 of which are encoded in the nucleus.

It is found in the plastid. Its subcellular location is the chloroplast thylakoid membrane. It carries out the reaction a plastoquinone + NADH + (n+1) H(+)(in) = a plastoquinol + NAD(+) + n H(+)(out). The catalysed reaction is a plastoquinone + NADPH + (n+1) H(+)(in) = a plastoquinol + NADP(+) + n H(+)(out). Its function is as follows. NDH shuttles electrons from NAD(P)H:plastoquinone, via FMN and iron-sulfur (Fe-S) centers, to quinones in the photosynthetic chain and possibly in a chloroplast respiratory chain. The immediate electron acceptor for the enzyme in this species is believed to be plastoquinone. Couples the redox reaction to proton translocation, and thus conserves the redox energy in a proton gradient. The chain is NAD(P)H-quinone oxidoreductase subunit 6, chloroplastic (ndhG) from Nicotiana tabacum (Common tobacco).